The primary structure comprises 134 residues: Small ribosomal subunit protein uS8c (134 aa).

This sequence belongs to the universal ribosomal protein uS8 family. In terms of assembly, part of the 30S ribosomal subunit.

It localises to the plastid. The protein localises to the chloroplast. In terms of biological role, one of the primary rRNA binding proteins, it binds directly to 16S rRNA central domain where it helps coordinate assembly of the platform of the 30S subunit. The chain is Small ribosomal subunit protein uS8c (rps8) from Lotus japonicus (Lotus corniculatus var. japonicus).